The chain runs to 1871 residues: Plexin-A3 (1871 aa).

A signal peptide spans 1–19 (MPSVCLLLLLFLAVGGALG). The 469-residue stretch at 20-488 (NRPFRAFVVT…SEKQVSQLPV (469 aa)) folds into the Sema domain. Residues 20–1220 (NRPFRAFVVT…SAERALTLPA (1201 aa)) are Extracellular-facing. A glycan (N-linked (GlcNAc...) asparagine) is linked at Asn59. 9 disulfides stabilise this stretch: Cys77-Cys86, Cys112-Cys120, Cys266-Cys387, Cys282-Cys338, Cys356-Cys375, Cys491-Cys508, Cys497-Cys539, Cys500-Cys517, and Cys511-Cys523. N-linked (GlcNAc...) asparagine glycosylation occurs at Asn548. Residues Cys574 and Cys594 are joined by a disulfide bond. N-linked (GlcNAc...) asparagine glycosylation is found at Asn637, Asn738, and Asn746. IPT/TIG domains follow at residues 840–933 (PRIT…YSFV), 935–1020 (PTFD…YTYT), 1023–1122 (PTVT…FTYY), and 1125–1211 (PSFE…LHIS). 5 N-linked (GlcNAc...) asparagine glycosylation sites follow: Asn1009, Asn1036, Asn1073, Asn1115, and Asn1162. Residues 1221 to 1241 (MMGLAAGGGLLLLAITAVLVA) form a helical membrane-spanning segment. Residues 1242-1871 (YKRKTQDADR…QIISLVSSDS (630 aa)) are Cytoplasmic-facing. Ser1596 carries the phosphoserine modification.

It belongs to the plexin family. In terms of assembly, interacts with CBFA2T3/MTG16.

It localises to the cell membrane. Coreceptor for SEMA3A and SEMA3F. Necessary for signaling by class 3 semaphorins and subsequent remodeling of the cytoskeleton. Plays a role in axon guidance in the developing nervous system. Regulates the migration of sympathetic neurons, but not of neural crest precursors. Required for normal dendrite spine morphology in pyramidal neurons. May play a role in regulating semaphorin-mediated programmed cell death in the developing nervous system. Class 3 semaphorins bind to a complex composed of a neuropilin and a plexin. The plexin modulates the affinity of the complex for specific semaphorins, and its cytoplasmic domain is required for the activation of down-stream signaling events in the cytoplasm. This chain is Plexin-A3 (PLXNA3), found in Homo sapiens (Human).